The following is a 241-amino-acid chain: Copper transport protein CTR3 (241 aa).

The Lumenal segment spans residues 1–41; that stretch reads MNMGGSSSTAAKKATCKISMLWNWYTIDTCFIARSWRNDTK. The helical transmembrane segment at 42–62 threads the bilayer; that stretch reads GKFAGSCIGCFALVVVAQWLT. Topologically, residues 63–159 are cytoplasmic; that stretch reads RFSRQFDVEL…SCCTLITPVD (97 aa). The chain crosses the membrane as a helical span at residues 160–180; it reads LYPTFLDHMIRVTIFVLQWGL. The Lumenal portion of the chain corresponds to 181–182; it reads SY. The helical transmembrane segment at 183–203 threads the bilayer; that stretch reads IIMLLFMYYNGYIIISCLIGA. The Cytoplasmic segment spans residues 204 to 241; the sequence is IVGRFIFCYEPLGSLGANGSAQGTVSYDKESDDRKCCL.

The protein belongs to the copper transporter (Ctr) (TC 1.A.56) family. SLC31A subfamily.

Its subcellular location is the cytoplasmic vesicle membrane. In terms of biological role, required for high affinity copper (probably reduced Cu I) transport into the cell. The protein is Copper transport protein CTR3 (CTR3) of Saccharomyces cerevisiae (strain ATCC 204508 / S288c) (Baker's yeast).